Reading from the N-terminus, the 178-residue chain is Large ribosomal subunit protein uL6 (178 aa).

This sequence belongs to the universal ribosomal protein uL6 family. Part of the 50S ribosomal subunit.

In terms of biological role, this protein binds to the 23S rRNA, and is important in its secondary structure. It is located near the subunit interface in the base of the L7/L12 stalk, and near the tRNA binding site of the peptidyltransferase center. The sequence is that of Large ribosomal subunit protein uL6 from Francisella tularensis subsp. novicida (strain U112).